The primary structure comprises 1521 residues: Protein dispatched homolog 1 (1521 aa).

The segment covering 1–10 (MAVISGSDSV) has biased composition (polar residues). The segment at 1 to 55 (MAVISGSDSVLLSNGSISTSTSNPSPLSPSDGDLPAQHLGPRETPRTKASPNGCL) is disordered. Positions 11 to 35 (LLSNGSISTSTSNPSPLSPSDGDLP) are enriched in low complexity. Asparagine 14 and asparagine 58 each carry an N-linked (GlcNAc...) asparagine glycan. Residues 189 to 209 (VVVLGMCTLLIVVCALVGVLV) traverse the membrane as a helical segment. Asparagine 390 carries an N-linked (GlcNAc...) asparagine glycan. In terms of domain architecture, SSD spans 485–657 (GIEFGIKHSL…VTWLPAVIVL (173 aa)). Transmembrane regions (helical) follow at residues 499-519 (LLMD…IMCV), 524-544 (MFIT…SYFL), and 548-568 (VFNF…LVGI). The N-linked (GlcNAc...) asparagine glycan is linked to asparagine 581. The next 8 membrane-spanning stretches (helical) occupy residues 603-623 (AALS…ANYV), 637-657 (GTAI…VIVL), 717-737 (YLWL…VCVN), 986-1006 (MGLS…NIII), 1008-1028 (LYAI…LVLL), 1038-1058 (VTIS…GVAY), 1081-1101 (IAMA…STVL), and 1109-1129 (FMML…QCLC). Composition is skewed to polar residues over residues 1355 to 1364 (QENLGRTSTH) and 1418 to 1428 (TKSKVSGLPNQ). The segment at 1355–1440 (QENLGRTSTH…KEEKQVEPSL (86 aa)) is disordered. An N-linked (GlcNAc...) asparagine glycan is attached at asparagine 1455.

This sequence belongs to the dispatched family. Interacts with SHH; via the cholesterol anchor of the dually lipid-modified SHH (ShhNp).

Its subcellular location is the membrane. Functions in hedgehog (Hh) signaling. Regulates the release and extracellular accumulation of cholesterol-modified hedgehog proteins and is hence required for effective production of the Hh signal. Synergizes with SCUBE2 to cause an increase in SHH secretion. The sequence is that of Protein dispatched homolog 1 (Disp1) from Mus musculus (Mouse).